A 490-amino-acid chain; its full sequence is Inosine-5'-monophosphate dehydrogenase (490 aa).

CBS domains are found at residues 96–154 (MIIN…SKPV) and 158–218 (MTKE…CKDE). NAD(+) is bound by residues D252 and 302–304 (GVG). Residues G304 and G306 each contribute to the K(+) site. Position 307 (S307) interacts with IMP. C309 is a K(+) binding site. C309 serves as the catalytic Thioimidate intermediate. IMP-binding positions include 342 to 344 (DGG), 365 to 366 (GN), and 389 to 393 (YRGMG). R406 acts as the Proton acceptor in catalysis. E418 serves as a coordination point for IMP. K(+) contacts are provided by E472, S473, and H474.

The protein belongs to the IMPDH/GMPR family. In terms of assembly, homotetramer. It depends on K(+) as a cofactor.

The catalysed reaction is IMP + NAD(+) + H2O = XMP + NADH + H(+). It functions in the pathway purine metabolism; XMP biosynthesis via de novo pathway; XMP from IMP: step 1/1. Its activity is regulated as follows. Mycophenolic acid (MPA) is a non-competitive inhibitor that prevents formation of the closed enzyme conformation by binding to the same site as the amobile flap. In contrast, mizoribine monophosphate (MZP) is a competitive inhibitor that induces the closed conformation. MPA is a potent inhibitor of mammalian IMPDHs but a poor inhibitor of the bacterial enzymes. MZP is a more potent inhibitor of bacterial IMPDH. Functionally, catalyzes the conversion of inosine 5'-phosphate (IMP) to xanthosine 5'-phosphate (XMP), the first committed and rate-limiting step in the de novo synthesis of guanine nucleotides, and therefore plays an important role in the regulation of cell growth. This is Inosine-5'-monophosphate dehydrogenase from Aquifex aeolicus (strain VF5).